The sequence spans 901 residues: Mediator of RNA polymerase II transcription subunit 14 (901 aa).

It belongs to the Mediator complex subunit 14 family. As to quaternary structure, component of the Mediator complex.

The protein resides in the nucleus. Component of the Mediator complex, a coactivator involved in the regulated transcription of nearly all RNA polymerase II-dependent genes. Mediator functions as a bridge to convey information from gene-specific regulatory proteins to the basal RNA polymerase II transcription machinery. Mediator is recruited to promoters by direct interactions with regulatory proteins and serves as a scaffold for the assembly of a functional preinitiation complex with RNA polymerase II and the general transcription factors. This Yarrowia lipolytica (strain CLIB 122 / E 150) (Yeast) protein is Mediator of RNA polymerase II transcription subunit 14 (RGR1).